A 97-amino-acid polypeptide reads, in one-letter code: Co-chaperonin GroES (97 aa).

Belongs to the GroES chaperonin family. In terms of assembly, heptamer of 7 subunits arranged in a ring. Interacts with the chaperonin GroEL.

The protein resides in the cytoplasm. Functionally, together with the chaperonin GroEL, plays an essential role in assisting protein folding. The GroEL-GroES system forms a nano-cage that allows encapsulation of the non-native substrate proteins and provides a physical environment optimized to promote and accelerate protein folding. GroES binds to the apical surface of the GroEL ring, thereby capping the opening of the GroEL channel. The polypeptide is Co-chaperonin GroES (Stutzerimonas stutzeri (Pseudomonas stutzeri)).